Reading from the N-terminus, the 365-residue chain is Outer membrane porin protein LC (365 aa).

The N-terminal stretch at 1 to 23 is a signal peptide; that stretch reads MKKLTVAISAVAASVLMAMSAQA.

This sequence belongs to the Gram-negative porin family. As to quaternary structure, homotrimer.

The protein localises to the host cell outer membrane. In terms of biological role, forms pores that allow passive diffusion of small molecules across the host cell outer membrane. The chain is Outer membrane porin protein LC (LC) from Enterobacteria phage PA-2 (Bacteriophage PA-2).